The primary structure comprises 521 residues: uncharacterized protein (521 aa).

Positions 14 to 41 (QFQQMQHQMQQQQQQQMQQQQQQQQQQQ) form a coiled coil. Composition is skewed to low complexity over residues 238–266 (LSGS…TSSS), 275–353 (SSTS…NNNN), and 423–482 (PRLS…PNNP). Disordered stretches follow at residues 238–357 (LSGS…ISGF) and 413–491 (TAVA…SNNG).

This is an uncharacterized protein from Dictyostelium discoideum (Social amoeba).